A 157-amino-acid chain; its full sequence is Ribosome maturation factor RimP (157 aa).

It belongs to the RimP family.

Its subcellular location is the cytoplasm. Required for maturation of 30S ribosomal subunits. The polypeptide is Ribosome maturation factor RimP (Thermus thermophilus (strain ATCC BAA-163 / DSM 7039 / HB27)).